A 66-amino-acid polypeptide reads, in one-letter code: Conotoxin Lt3.5 (66 aa).

The first 20 residues, 1 to 20 (MMSKLGALLTICLLLFPLTA), serve as a signal peptide directing secretion. Residues 21-53 (VPLDGDQPLDRHAERMHDGISPKRHPWFDPVKR) constitute a propeptide that is removed on maturation. Intrachain disulfides connect cysteine 54–cysteine 66, cysteine 55–cysteine 62, and cysteine 59–cysteine 65. The residue at position 64 (proline 64) is a 4-hydroxyproline.

The protein belongs to the conotoxin M superfamily. As to expression, expressed by the venom duct.

It is found in the secreted. This is Conotoxin Lt3.5 from Conus litteratus (Lettered cone).